Here is a 379-residue protein sequence, read N- to C-terminus: ATP phosphoribosyltransferase regulatory subunit (379 aa).

It belongs to the class-II aminoacyl-tRNA synthetase family. HisZ subfamily. Heteromultimer composed of HisG and HisZ subunits.

Its subcellular location is the cytoplasm. It functions in the pathway amino-acid biosynthesis; L-histidine biosynthesis; L-histidine from 5-phospho-alpha-D-ribose 1-diphosphate: step 1/9. In terms of biological role, required for the first step of histidine biosynthesis. May allow the feedback regulation of ATP phosphoribosyltransferase activity by histidine. In Gluconobacter oxydans (strain 621H) (Gluconobacter suboxydans), this protein is ATP phosphoribosyltransferase regulatory subunit.